Reading from the N-terminus, the 89-residue chain is Small ribosomal subunit protein uS14A (89 aa).

Belongs to the universal ribosomal protein uS14 family. In terms of assembly, part of the 30S ribosomal subunit. Contacts proteins S3 and S10.

In terms of biological role, binds 16S rRNA, required for the assembly of 30S particles and may also be responsible for determining the conformation of the 16S rRNA at the A site. The protein is Small ribosomal subunit protein uS14A of Oceanobacillus iheyensis (strain DSM 14371 / CIP 107618 / JCM 11309 / KCTC 3954 / HTE831).